The sequence spans 266 residues: 4-hydroxy-tetrahydrodipicolinate reductase (266 aa).

Residues 8-13 and glutamate 33 contribute to the NAD(+) site; that span reads GAAGRM. Position 34 (arginine 34) interacts with NADP(+). NAD(+) is bound by residues 97–99 and 121–124; these read GST and APNM. Catalysis depends on histidine 154, which acts as the Proton donor/acceptor. Position 155 (histidine 155) interacts with (S)-2,3,4,5-tetrahydrodipicolinate. Lysine 158 functions as the Proton donor in the catalytic mechanism. 164-165 contacts (S)-2,3,4,5-tetrahydrodipicolinate; sequence GT.

The protein belongs to the DapB family.

It is found in the cytoplasm. It catalyses the reaction (S)-2,3,4,5-tetrahydrodipicolinate + NAD(+) + H2O = (2S,4S)-4-hydroxy-2,3,4,5-tetrahydrodipicolinate + NADH + H(+). The enzyme catalyses (S)-2,3,4,5-tetrahydrodipicolinate + NADP(+) + H2O = (2S,4S)-4-hydroxy-2,3,4,5-tetrahydrodipicolinate + NADPH + H(+). The protein operates within amino-acid biosynthesis; L-lysine biosynthesis via DAP pathway; (S)-tetrahydrodipicolinate from L-aspartate: step 4/4. Functionally, catalyzes the conversion of 4-hydroxy-tetrahydrodipicolinate (HTPA) to tetrahydrodipicolinate. The polypeptide is 4-hydroxy-tetrahydrodipicolinate reductase (Trichlorobacter lovleyi (strain ATCC BAA-1151 / DSM 17278 / SZ) (Geobacter lovleyi)).